We begin with the raw amino-acid sequence, 306 residues long: Type 2A encapsulin shell protein SrpI (306 aa).

The protein belongs to the encapsulin family. Family 2A subfamily. As to quaternary structure, the 24.5 nm encapsulin nanocompartment is formed by 60 subunits; monomers form pentamers which assemble to form shells. There are 12 positively charged pores where the pentamers meet with a minimal pore diameter of 3.7 Angstroms as well 3-fold axis channels and dimer channels.

The protein localises to the encapsulin nanocompartment. In terms of biological role, shell component of a type 2A encapsulin nanocompartment. Expression in E.coli generates nanocompartments with an average diameter of 25 nm. They can be disassembled by treatment with 6M guanidine hydrochloride and reassembled with cargo. The nanocompartment is probably involved in sulfur metabolism. Probably allows passage of cysteine into its interior; during growth in light the physiological pH is 8-8.4, about 30-54% of free cysteine (charge -1) would be able to pass through the shell. This Synechococcus elongatus (strain ATCC 33912 / PCC 7942 / FACHB-805) (Anacystis nidulans R2) protein is Type 2A encapsulin shell protein SrpI.